Reading from the N-terminus, the 78-residue chain is Exodeoxyribonuclease 7 small subunit (78 aa).

This sequence belongs to the XseB family. As to quaternary structure, heterooligomer composed of large and small subunits.

Its subcellular location is the cytoplasm. The catalysed reaction is Exonucleolytic cleavage in either 5'- to 3'- or 3'- to 5'-direction to yield nucleoside 5'-phosphates.. Functionally, bidirectionally degrades single-stranded DNA into large acid-insoluble oligonucleotides, which are then degraded further into small acid-soluble oligonucleotides. This chain is Exodeoxyribonuclease 7 small subunit, found in Cutibacterium acnes (strain DSM 16379 / KPA171202) (Propionibacterium acnes).